The primary structure comprises 592 residues: UvrABC system protein C (592 aa).

The 78-residue stretch at 14 to 91 (KKPGCYLWKN…IKKHKPRYNI (78 aa)) folds into the GIY-YIG domain. In terms of domain architecture, UVR spans 197–232 (DQVLKDLKEKESIASEKFDFEQAKKYLDLQKAINLI).

It belongs to the UvrC family. In terms of assembly, interacts with UvrB in an incision complex.

Its subcellular location is the cytoplasm. The UvrABC repair system catalyzes the recognition and processing of DNA lesions. UvrC both incises the 5' and 3' sides of the lesion. The N-terminal half is responsible for the 3' incision and the C-terminal half is responsible for the 5' incision. This is UvrABC system protein C from Mycoplasmoides gallisepticum (strain R(low / passage 15 / clone 2)) (Mycoplasma gallisepticum).